We begin with the raw amino-acid sequence, 166 residues long: Large ribosomal subunit protein uL11 (166 aa).

Residue arginine 67 is modified to N5-methylarginine.

The protein belongs to the universal ribosomal protein uL11 family.

This Encephalitozoon cuniculi (strain GB-M1) (Microsporidian parasite) protein is Large ribosomal subunit protein uL11 (RPL12).